Here is a 159-residue protein sequence, read N- to C-terminus: GDP-mannose mannosyl hydrolase (159 aa).

Substrate-binding positions include 2–3 (FL), phenylalanine 8, and arginine 36. Residues 13 to 153 (RSTPLVSLDF…SRAYFLAEKR (141 aa)) enclose the Nudix hydrolase domain. Residues glycine 49, glutamate 69, and glutamine 122 each contribute to the Mg(2+) site. The Nudix box motif lies at 50–71 (GRVQKDETLEAAFERLTMAELG).

Belongs to the Nudix hydrolase family. Homodimer. Mg(2+) serves as cofactor.

It catalyses the reaction GDP-alpha-D-mannose + H2O = D-mannose + GDP + H(+). Hydrolyzes GDP-mannose. This Escherichia coli O157:H7 protein is GDP-mannose mannosyl hydrolase.